A 341-amino-acid chain; its full sequence is L-threonine 3-dehydrogenase (341 aa).

Zn(2+) is bound at residue Cys38. Residues Thr40 and His43 each act as charge relay system in the active site. 6 residues coordinate Zn(2+): His63, Glu64, Cys93, Cys96, Cys99, and Cys107. Residues Ile175, Asp195, Arg200, 262–264 (LGI), and 286–287 (IY) each bind NAD(+).

It belongs to the zinc-containing alcohol dehydrogenase family. In terms of assembly, homotetramer. Requires Zn(2+) as cofactor.

Its subcellular location is the cytoplasm. It catalyses the reaction L-threonine + NAD(+) = (2S)-2-amino-3-oxobutanoate + NADH + H(+). It functions in the pathway amino-acid degradation; L-threonine degradation via oxydo-reductase pathway; glycine from L-threonine: step 1/2. In terms of biological role, catalyzes the NAD(+)-dependent oxidation of L-threonine to 2-amino-3-ketobutyrate. The chain is L-threonine 3-dehydrogenase from Proteus mirabilis (strain HI4320).